The sequence spans 332 residues: Packaging enzyme P4 (332 aa).

An involved in the regulation and mechanisms of transcription, replication and genome packaging region spans residues 111 to 138 (RWPSEGIYSGVTALMGATGSGKSITLNE). An ATP-binding site is contributed by 126–133 (GATGSGKS). The segment at 310-332 (LERGSVDTDDRNSAPRRGANFSL) is disordered. The segment covering 313-322 (GSVDTDDRNS) has biased composition (basic and acidic residues).

As to quaternary structure, homohexamer. Part of the packaging complex composed of RDRP, P4 and P7.

Its subcellular location is the virion. It catalyses the reaction a ribonucleoside 5'-triphosphate + H2O = a ribonucleoside 5'-diphosphate + phosphate + H(+). Its function is as follows. Packaging motor with helicase and translocase activities. Part of the packaging complex that packages the viral RNA segments, replicate them into a double-stranded form and transcribe them. is one of the structural proteins of the polyhedral procapsid, which is responsible for genomic replication and transcription. Displays single-stranded RNA-stimulated NTPase activity. The polypeptide is Packaging enzyme P4 (P4) (Pseudomonas savastanoi pv. phaseolicola (Pseudomonas syringae pv. phaseolicola)).